The sequence spans 231 residues: Cytidylate kinase (231 aa).

12–20 (GPSGAGKGT) contributes to the ATP binding site.

It belongs to the cytidylate kinase family. Type 1 subfamily.

Its subcellular location is the cytoplasm. It catalyses the reaction CMP + ATP = CDP + ADP. The enzyme catalyses dCMP + ATP = dCDP + ADP. The sequence is that of Cytidylate kinase from Shewanella amazonensis (strain ATCC BAA-1098 / SB2B).